The sequence spans 148 residues: Snaclec jerdonuxin subunit beta (148 aa).

A signal peptide spans 1 to 23; sequence MVRFIFVSFGLLVVFLSLSGIGA. Cystine bridges form between C27-C38, C55-C144, and C121-C136. One can recognise a C-type lectin domain in the interval 34–145; the sequence is YDEHCYQVFQ…CSSKRYIVCK (112 aa).

Belongs to the snaclec family. Tetramer of 4 heterodimers of alpha and beta subunits; disulfide-linked. Expressed by the venom gland.

Its subcellular location is the secreted. In terms of biological role, snaclec that strongly induces platelet aggregation, in a dose-dependent manner. This is Snaclec jerdonuxin subunit beta from Protobothrops jerdonii (Jerdon's pitviper).